Reading from the N-terminus, the 415-residue chain is Putative serpin-Z6C (415 aa).

The interval 357–381 is RCL; sequence GTEAAAATAVCLTFASAAPSSRRPA.

The protein belongs to the serpin family.

Functionally, probable serine protease inhibitor. This Oryza sativa subsp. japonica (Rice) protein is Putative serpin-Z6C.